Consider the following 1338-residue polypeptide: Phosphoribosylformylglycinamidine synthase (1338 aa).

Residue Ser-215 is modified to Phosphoserine. ATP contacts are provided by residues 322-333 and 402-404; these read GATTGTGGRIRD and AGF. Phosphoserine is present on Ser-569. Phosphothreonine occurs at positions 619 and 623. Ala-706 provides a ligand contact to ATP. Mg(2+)-binding residues include Asp-707, Glu-746, Asn-750, and Asp-909. Ser-911 provides a ligand contact to ATP. In terms of domain architecture, Glutamine amidotransferase type-1 spans 1064-1302; that stretch reads RVAILREEGS…AVMPHPERAV (239 aa). Cys-1158 functions as the Nucleophile in the catalytic mechanism. Residues His-1297 and Glu-1299 contribute to the active site.

This sequence in the N-terminal section; belongs to the FGAMS family.

It localises to the cytoplasm. The enzyme catalyses N(2)-formyl-N(1)-(5-phospho-beta-D-ribosyl)glycinamide + L-glutamine + ATP + H2O = 2-formamido-N(1)-(5-O-phospho-beta-D-ribosyl)acetamidine + L-glutamate + ADP + phosphate + H(+). The protein operates within purine metabolism; IMP biosynthesis via de novo pathway; 5-amino-1-(5-phospho-D-ribosyl)imidazole from N(2)-formyl-N(1)-(5-phospho-D-ribosyl)glycinamide: step 1/2. Its function is as follows. Phosphoribosylformylglycinamidine synthase involved in the purines biosynthetic pathway. Catalyzes the ATP-dependent conversion of formylglycinamide ribonucleotide (FGAR) and glutamine to yield formylglycinamidine ribonucleotide (FGAM) and glutamate. The protein is Phosphoribosylformylglycinamidine synthase (PFAS) of Homo sapiens (Human).